Here is a 179-residue protein sequence, read N- to C-terminus: Ribosome-recycling factor (179 aa).

The protein belongs to the RRF family.

The protein resides in the cytoplasm. Responsible for the release of ribosomes from messenger RNA at the termination of protein biosynthesis. May increase the efficiency of translation by recycling ribosomes from one round of translation to another. This chain is Ribosome-recycling factor, found in Chlamydia trachomatis serovar D (strain ATCC VR-885 / DSM 19411 / UW-3/Cx).